Here is a 304-residue protein sequence, read N- to C-terminus: Syntaxin-132 (304 aa).

Met1 carries the post-translational modification N-acetylmethionine. Residues 1 to 30 (MNDLLKGSFELPRGQSSREGDVELGEQQGG) are disordered. Residues 1–275 (MNDLLKGSFE…AKSLQKNSRK (275 aa)) are Cytoplasmic-facing. Coiled coils occupy residues 34–67 (LEDFFKKVQVIDKQYDKLDKLLKKLQASHEESKS) and 129–162 (TLSLKKKLKDKMAEFQVLRENIQQEYRDVVDRRV). The region spanning 204-266 (LAEIQERHDA…QSGNTALQRA (63 aa)) is the t-SNARE coiled-coil homology domain. The chain crosses the membrane as a helical; Anchor for type IV membrane protein span at residues 276–296 (WMCIAIIILLIVVAVIVVGVL). Residues 297–304 (KPWKNKSA) lie on the Vesicular side of the membrane.

It belongs to the syntaxin family. As to quaternary structure, part of the t-SNARE complex. Widely expressed in all tissues throughout plant development.

The protein localises to the cell membrane. Vesicle trafficking protein that functions in the secretory pathway. Acts in coordination with SYP123 to mediate tip-focused membrane trafficking for root hair tip growth. Functions in root hair elongation by forming SNARE complexes with VAMP721,VAMP722 or VAMP724. Involved in cytokinesis. Acts as a cell plate-specific syntaxin, required for the fusion of vesicles at the plane of cell division. Required for secretory trafficking to the plasma membrane during interphase. Involved in the regulation of density of the H(+) ATPase proteins at the plasma membrane of root and shoot in epidermal cells. Modulation of SYP132 expression by auxin affects clathrin-sensitive H(+) ATPase traffic from the plasma membrane, and influences apoplastic acidification and plant growth. This Arabidopsis thaliana (Mouse-ear cress) protein is Syntaxin-132.